A 250-amino-acid polypeptide reads, in one-letter code: MFRATCNTRDFKKVINATSNLVDEICFEVDENGIKASAMDPSHVALVSMEMPKEVFEEYEGDIHDIGIDLEALKKIIARGKGDEKLILDLDVEKNKLNVTFKSNVTRKFSIALYDVSSSNLKVPDIEYPNNVSIKAGAFVEALKDAELVNDHITLKVDEDKFIIYSKGDLNQSETVFDNGIEDDDATLAEFNMGEASRSTFNLAYLKDLTKSTAAEDLLKIYLGSDMPVKIEYEVSGSKLVFLLAPRIES.

Belongs to the PCNA family. In terms of assembly, homotrimer. The subunits circularize to form a toroid; DNA passes through its center. Replication factor C (RFC) is required to load the toroid on the DNA.

Sliding clamp subunit that acts as a moving platform for DNA processing. Responsible for tethering the catalytic subunit of DNA polymerase and other proteins to DNA during high-speed replication. The sequence is that of DNA polymerase sliding clamp from Methanococcus maripaludis (strain C6 / ATCC BAA-1332).